Consider the following 256-residue polypeptide: Anamorsin homolog (256 aa).

Residues methionine 1–isoleucine 136 are N-terminal SAM-like domain. A disordered region spans residues tryptophan 126 to isoleucine 148. Residues serine 131–proline 144 are compositionally biased toward low complexity. Residues proline 137–threonine 166 are linker. Residues cysteine 176, cysteine 185, cysteine 188, and cysteine 190 each coordinate [2Fe-2S] cluster. The tract at residues cysteine 176–cysteine 190 is fe-S binding site A. Residues cysteine 217, cysteine 220, cysteine 228, and cysteine 231 each contribute to the [4Fe-4S] cluster site. 2 consecutive short sequence motifs (cx2C motif) follow at residues cysteine 217–cysteine 220 and cysteine 228–cysteine 231. The fe-S binding site B stretch occupies residues cysteine 217–cysteine 231.

Belongs to the anamorsin family. Monomer. [2Fe-2S] cluster is required as a cofactor. The cofactor is [4Fe-4S] cluster.

It localises to the cytoplasm. It is found in the mitochondrion intermembrane space. Functionally, component of the cytosolic iron-sulfur (Fe-S) protein assembly (CIA) machinery. Required for the maturation of extramitochondrial Fe-S proteins. Part of an electron transfer chain functioning in an early step of cytosolic Fe-S biogenesis, facilitating the de novo assembly of a [4Fe-4S] cluster on the cytosolic Fe-S scaffold complex. Electrons are transferred from NADPH via a FAD- and FMN-containing diflavin oxidoreductase. Together with the diflavin oxidoreductase, also required for the assembly of the diferric tyrosyl radical cofactor of ribonucleotide reductase (RNR), probably by providing electrons for reduction during radical cofactor maturation in the catalytic small subunit. This is Anamorsin homolog (rsc43) from Dictyostelium discoideum (Social amoeba).